Here is a 319-residue protein sequence, read N- to C-terminus: Lipoyl synthase (319 aa).

[4Fe-4S] cluster-binding residues include C61, C66, C72, C87, C91, C94, and S300. Positions 73 to 289 constitute a Radical SAM core domain; the sequence is WDKKHATFMI…ESVAYSKGFL (217 aa).

This sequence belongs to the radical SAM superfamily. Lipoyl synthase family. It depends on [4Fe-4S] cluster as a cofactor.

It localises to the cytoplasm. The catalysed reaction is [[Fe-S] cluster scaffold protein carrying a second [4Fe-4S](2+) cluster] + N(6)-octanoyl-L-lysyl-[protein] + 2 oxidized [2Fe-2S]-[ferredoxin] + 2 S-adenosyl-L-methionine + 4 H(+) = [[Fe-S] cluster scaffold protein] + N(6)-[(R)-dihydrolipoyl]-L-lysyl-[protein] + 4 Fe(3+) + 2 hydrogen sulfide + 2 5'-deoxyadenosine + 2 L-methionine + 2 reduced [2Fe-2S]-[ferredoxin]. It functions in the pathway protein modification; protein lipoylation via endogenous pathway; protein N(6)-(lipoyl)lysine from octanoyl-[acyl-carrier-protein]: step 2/2. Its function is as follows. Catalyzes the radical-mediated insertion of two sulfur atoms into the C-6 and C-8 positions of the octanoyl moiety bound to the lipoyl domains of lipoate-dependent enzymes, thereby converting the octanoylated domains into lipoylated derivatives. The polypeptide is Lipoyl synthase (Rhodopseudomonas palustris (strain BisB18)).